The primary structure comprises 323 residues: Putative CDC123-like protein L884 (323 aa).

It belongs to the CDC123 family.

The protein is Putative CDC123-like protein L884 of Acanthamoeba polyphaga mimivirus (APMV).